The primary structure comprises 715 residues: Fatty acid oxidation complex subunit alpha (715 aa).

The enoyl-CoA hydratase/isomerase stretch occupies residues 1–189; it reads MIYQGETLTV…KVGAIDAVVA (189 aa). Residue aspartate 296 participates in substrate binding. The interval 311 to 715 is 3-hydroxyacyl-CoA dehydrogenase; it reads AKATSHAAVL…EMAAQGKTFY (405 aa). NAD(+) is bound by residues methionine 325, aspartate 344, 401–403, lysine 408, and serine 430; that span reads VVE. Catalysis depends on histidine 451, which acts as the For 3-hydroxyacyl-CoA dehydrogenase activity. Asparagine 454 is a binding site for NAD(+). Residues asparagine 501 and tyrosine 661 each contribute to the substrate site.

The protein in the N-terminal section; belongs to the enoyl-CoA hydratase/isomerase family. In the C-terminal section; belongs to the 3-hydroxyacyl-CoA dehydrogenase family. Heterotetramer of two alpha chains (FadB) and two beta chains (FadA).

It catalyses the reaction a (3S)-3-hydroxyacyl-CoA + NAD(+) = a 3-oxoacyl-CoA + NADH + H(+). The enzyme catalyses a (3S)-3-hydroxyacyl-CoA = a (2E)-enoyl-CoA + H2O. The catalysed reaction is a 4-saturated-(3S)-3-hydroxyacyl-CoA = a (3E)-enoyl-CoA + H2O. It carries out the reaction (3S)-3-hydroxybutanoyl-CoA = (3R)-3-hydroxybutanoyl-CoA. It catalyses the reaction a (3Z)-enoyl-CoA = a 4-saturated (2E)-enoyl-CoA. The enzyme catalyses a (3E)-enoyl-CoA = a 4-saturated (2E)-enoyl-CoA. The protein operates within lipid metabolism; fatty acid beta-oxidation. In terms of biological role, involved in the aerobic and anaerobic degradation of long-chain fatty acids via beta-oxidation cycle. Catalyzes the formation of 3-oxoacyl-CoA from enoyl-CoA via L-3-hydroxyacyl-CoA. It can also use D-3-hydroxyacyl-CoA and cis-3-enoyl-CoA as substrate. The sequence is that of Fatty acid oxidation complex subunit alpha from Aeromonas hydrophila subsp. hydrophila (strain ATCC 7966 / DSM 30187 / BCRC 13018 / CCUG 14551 / JCM 1027 / KCTC 2358 / NCIMB 9240 / NCTC 8049).